We begin with the raw amino-acid sequence, 229 residues long: Large ribosomal subunit protein uL4 (229 aa).

The segment at 62–103 (SRRQGTHQVKNRAAVSGSGKKPWKQKGTGRARHSSRRSPIWV) is disordered. The segment covering 82 to 97 (KPWKQKGTGRARHSSR) has biased composition (basic residues).

It belongs to the universal ribosomal protein uL4 family. Part of the 50S ribosomal subunit.

Functionally, one of the primary rRNA binding proteins, this protein initially binds near the 5'-end of the 23S rRNA. It is important during the early stages of 50S assembly. It makes multiple contacts with different domains of the 23S rRNA in the assembled 50S subunit and ribosome. Forms part of the polypeptide exit tunnel. The polypeptide is Large ribosomal subunit protein uL4 (Mycoplasmopsis synoviae (strain 53) (Mycoplasma synoviae)).